A 360-amino-acid chain; its full sequence is Zinc finger protein ztf-2 (360 aa).

Residues 19–41 (LSSPEKEHRRKRRRGEVANPSNT) are disordered. C2H2-type zinc fingers lie at residues 87-109 (RTCS…KRVH), 115-138 (FKCR…AKTH), and 180-203 (YRCQ…SHLH). Residues 248 to 260 (PLSPCRSESSSDS) show a composition bias toward low complexity. Residues 248 to 272 (PLSPCRSESSSDSGIQTDPEEEASI) are disordered.

As to expression, expressed in pharyngeal epithelium/arcade, which connects the pharynx to the mouth.

In terms of biological role, transcription factor. Represses gene expression, probably via binding to DNA consensus sequence 5'-[AT][CT]TTCC[AC][AG]-3' in promoter regions. May play a role in pharynx morphogenesis. In Caenorhabditis elegans, this protein is Zinc finger protein ztf-2.